We begin with the raw amino-acid sequence, 496 residues long: Cytochrome P450 71D179 (496 aa).

The helical; Signal-anchor for type II membrane protein transmembrane segment at 1-21 threads the bilayer; that stretch reads MDISISWVVIIVSVLSYLILM. Cys-435 contributes to the heme binding site.

This sequence belongs to the cytochrome P450 family. The cofactor is heme.

Its subcellular location is the membrane. It participates in secondary metabolite biosynthesis; terpenoid biosynthesis. Functionally, involved in the biosynthesis of phenolic monoterpenes natural products thymol and carvacrol which have a broad range of biological activities acting as antimicrobial compounds, insecticides, antioxidants and pharmaceutical agents. Catalyzes probably the C3-hydroxylation of gamma-terpinene to produce thymol. This Thymus vulgaris (Thyme) protein is Cytochrome P450 71D179.